A 297-amino-acid polypeptide reads, in one-letter code: N-acetylneuraminate lyase (297 aa).

Residues Ser47 and Thr48 each coordinate aceneuramate. Tyr137 acts as the Proton donor in catalysis. Lys165 acts as the Schiff-base intermediate with substrate in catalysis. Aceneuramate contacts are provided by Thr167, Gly189, Asp191, Glu192, and Ser208.

Belongs to the DapA family. NanA subfamily. Homotetramer.

It is found in the cytoplasm. It carries out the reaction aceneuramate = aldehydo-N-acetyl-D-mannosamine + pyruvate. The protein operates within amino-sugar metabolism; N-acetylneuraminate degradation; D-fructose 6-phosphate from N-acetylneuraminate: step 1/5. In terms of biological role, catalyzes the reversible aldol cleavage of N-acetylneuraminic acid (sialic acid; Neu5Ac) to form pyruvate and N-acetylmannosamine (ManNAc) via a Schiff base intermediate. This is N-acetylneuraminate lyase from Shigella boydii serotype 4 (strain Sb227).